The sequence spans 296 residues: 2-dehydropantoate 2-reductase (296 aa).

Residues Gly-7 to Gly-12, Asn-94, and Ala-120 contribute to the NADP(+) site. Asn-94 is a substrate binding site. Lys-175 acts as the Proton donor in catalysis. Residues Asn-179, Asn-183, Asn-193, and Ser-245 each contribute to the substrate site. Glu-257 contacts NADP(+).

Belongs to the ketopantoate reductase family.

It is found in the cytoplasm. It catalyses the reaction (R)-pantoate + NADP(+) = 2-dehydropantoate + NADPH + H(+). Its pathway is cofactor biosynthesis; (R)-pantothenate biosynthesis; (R)-pantoate from 3-methyl-2-oxobutanoate: step 2/2. In terms of biological role, catalyzes the NADPH-dependent reduction of ketopantoate into pantoic acid. The chain is 2-dehydropantoate 2-reductase (panE) from Vibrio cholerae serotype O1 (strain ATCC 39315 / El Tor Inaba N16961).